Reading from the N-terminus, the 466-residue chain is Methylenetetrahydrofolate--tRNA-(uracil-5-)-methyltransferase TrmFO (466 aa).

FAD is bound at residue 14-19 (GGGLAG).

The protein belongs to the MnmG family. TrmFO subfamily. It depends on FAD as a cofactor.

Its subcellular location is the cytoplasm. The catalysed reaction is uridine(54) in tRNA + (6R)-5,10-methylene-5,6,7,8-tetrahydrofolate + NADH + H(+) = 5-methyluridine(54) in tRNA + (6S)-5,6,7,8-tetrahydrofolate + NAD(+). The enzyme catalyses uridine(54) in tRNA + (6R)-5,10-methylene-5,6,7,8-tetrahydrofolate + NADPH + H(+) = 5-methyluridine(54) in tRNA + (6S)-5,6,7,8-tetrahydrofolate + NADP(+). In terms of biological role, catalyzes the folate-dependent formation of 5-methyl-uridine at position 54 (M-5-U54) in all tRNAs. This Brucella melitensis biotype 1 (strain ATCC 23456 / CCUG 17765 / NCTC 10094 / 16M) protein is Methylenetetrahydrofolate--tRNA-(uracil-5-)-methyltransferase TrmFO.